Reading from the N-terminus, the 197-residue chain is Rac-like GTP-binding protein ARAC1 (197 aa).

Position 13–20 (13–20 (GDGAVGKT)) interacts with GTP. Positions 35–43 (YVPTVFDNF) match the Effector region motif. Residues 60-64 (DTAGQ) and 118-121 (TKLD) each bind GTP. Position 194 is a cysteine methyl ester (Cys-194). Cys-194 is lipidated: S-geranylgeranyl cysteine. The propeptide at 195–197 (SIL) is removed in mature form.

It belongs to the small GTPase superfamily. Rho family. In terms of assembly, interacts with SPK1. Ubiquitous.

The protein localises to the cytoplasm. Its subcellular location is the membrane. Its function is as follows. Inactive GDP-bound Rho GTPases reside in the cytosol, are found in a complex with Rho GDP-dissociation inhibitors (Rho GDIs), and are released from the GDI protein in order to translocate to membranes upon activation. This chain is Rac-like GTP-binding protein ARAC1 (ARAC1), found in Arabidopsis thaliana (Mouse-ear cress).